The sequence spans 393 residues: Acetate kinase (393 aa).

Asn8 is a Mg(2+) binding site. Lys15 contacts ATP. Arg91 lines the substrate pocket. Asp148 acts as the Proton donor/acceptor in catalysis. ATP contacts are provided by residues 206 to 210, 280 to 282, and 325 to 329; these read HLGSG, DMR, and GVGEN. Glu376 contributes to the Mg(2+) binding site.

It belongs to the acetokinase family. As to quaternary structure, homodimer. Mg(2+) serves as cofactor. Requires Mn(2+) as cofactor.

The protein resides in the cytoplasm. It carries out the reaction acetate + ATP = acetyl phosphate + ADP. It participates in metabolic intermediate biosynthesis; acetyl-CoA biosynthesis; acetyl-CoA from acetate: step 1/2. Catalyzes the formation of acetyl phosphate from acetate and ATP. Can also catalyze the reverse reaction. This is Acetate kinase from Rhizobium meliloti (Ensifer meliloti).